Here is a 334-residue protein sequence, read N- to C-terminus: Formylmethanofuran--tetrahydromethanopterin formyltransferase (334 aa).

Belongs to the FTR family. As to quaternary structure, homotetramer.

It is found in the cytoplasm. It carries out the reaction N-formylmethanofuran + 5,6,7,8-tetrahydromethanopterin + H(+) = N(5)-formyl-5,6,7,8-tetrahydromethanopterin + methanofuran. It functions in the pathway one-carbon metabolism; formaldehyde degradation; formate from formaldehyde (H(4)MPT route): step 4/5. In terms of biological role, catalyzes the transfer of a formyl group from 5-formyl tetrahydromethanopterin (5-formyl-H(4)MPT) to methanofuran (MFR) to produce formylmethanofuran (formyl-MFR) and tetrahydromethanopterin (H(4)MPT). The chain is Formylmethanofuran--tetrahydromethanopterin formyltransferase from Rhodopirellula baltica (strain DSM 10527 / NCIMB 13988 / SH1).